The following is a 174-amino-acid chain: Myosin regulatory light chain sqh (174 aa).

Position 21 is a phosphothreonine (Thr-21). Ser-22 carries the phosphoserine modification. EF-hand domains follow at residues 31-66 (AQIAEFKEAFNMIDQNRDGFVEKEDLHDMLASLGKN) and 100-135 (DPEDVIKNAFGCFDEENMGVLPEDRLRELLTTMGDR). Asp-44, Asn-46, Asp-48, and Asp-55 together coordinate Ca(2+).

Myosin is a hexamer of 2 heavy chains and 4 light chains. In terms of processing, phosphorylation plays a central role in myosin regulation.

Required for cytokinesis, could regulate contractile ring function. The polypeptide is Myosin regulatory light chain sqh (sqh) (Drosophila melanogaster (Fruit fly)).